The chain runs to 280 residues: Octanoyltransferase LIP2p2, chloroplastic (280 aa).

Residues 1-34 (MVFSVATSSVTNPKLHHHHHLSDFNRNRVSTSLK) constitute a chloroplast transit peptide. The region spanning 81–270 (QECSDSLIIL…EFSEVFQLQM (190 aa)) is the BPL/LPL catalytic domain. Substrate-binding positions include 123 to 130 (RGGEVTYH), 191 to 193 (AIG), and 204 to 206 (GLA). Residue cysteine 222 is the Acyl-thioester intermediate of the active site.

It belongs to the LipB family. In terms of tissue distribution, expressed in roots, leaves, cauline leaves, stems, siliques and flowers.

The protein resides in the plastid. The protein localises to the chloroplast. The catalysed reaction is octanoyl-[ACP] + L-lysyl-[protein] = N(6)-octanoyl-L-lysyl-[protein] + holo-[ACP] + H(+). It participates in protein modification; protein lipoylation via endogenous pathway; protein N(6)-(lipoyl)lysine from octanoyl-[acyl-carrier-protein]: step 1/2. Catalyzes the transfer of endogenously produced octanoic acid from octanoyl-acyl-carrier-protein onto the lipoyl domains of lipoate-dependent enzymes. Lipoyl-ACP can also act as a substrate although octanoyl-ACP is likely to be the physiological substrate. Together with LIP1P is essential for de novo plastidial protein lipoylation during seed development. Acts redundantly with LIP2P. This is Octanoyltransferase LIP2p2, chloroplastic from Arabidopsis thaliana (Mouse-ear cress).